The chain runs to 427 residues: Serine--tRNA ligase (427 aa).

L-serine is bound at residue 230–232 (TAE). Position 261–263 (261–263 (RAE)) interacts with ATP. Residue E284 participates in L-serine binding. 348–351 (EISS) lines the ATP pocket. An L-serine-binding site is contributed by S384.

This sequence belongs to the class-II aminoacyl-tRNA synthetase family. Type-1 seryl-tRNA synthetase subfamily. As to quaternary structure, homodimer. The tRNA molecule binds across the dimer.

It is found in the cytoplasm. It catalyses the reaction tRNA(Ser) + L-serine + ATP = L-seryl-tRNA(Ser) + AMP + diphosphate + H(+). The catalysed reaction is tRNA(Sec) + L-serine + ATP = L-seryl-tRNA(Sec) + AMP + diphosphate + H(+). Its pathway is aminoacyl-tRNA biosynthesis; selenocysteinyl-tRNA(Sec) biosynthesis; L-seryl-tRNA(Sec) from L-serine and tRNA(Sec): step 1/1. Catalyzes the attachment of serine to tRNA(Ser). Is also able to aminoacylate tRNA(Sec) with serine, to form the misacylated tRNA L-seryl-tRNA(Sec), which will be further converted into selenocysteinyl-tRNA(Sec). This is Serine--tRNA ligase from Moorella thermoacetica (strain ATCC 39073 / JCM 9320).